The primary structure comprises 225 residues: Leucyl/phenylalanyl-tRNA--protein transferase (225 aa).

The protein belongs to the L/F-transferase family.

It localises to the cytoplasm. It carries out the reaction N-terminal L-lysyl-[protein] + L-leucyl-tRNA(Leu) = N-terminal L-leucyl-L-lysyl-[protein] + tRNA(Leu) + H(+). It catalyses the reaction N-terminal L-arginyl-[protein] + L-leucyl-tRNA(Leu) = N-terminal L-leucyl-L-arginyl-[protein] + tRNA(Leu) + H(+). The enzyme catalyses L-phenylalanyl-tRNA(Phe) + an N-terminal L-alpha-aminoacyl-[protein] = an N-terminal L-phenylalanyl-L-alpha-aminoacyl-[protein] + tRNA(Phe). In terms of biological role, functions in the N-end rule pathway of protein degradation where it conjugates Leu, Phe and, less efficiently, Met from aminoacyl-tRNAs to the N-termini of proteins containing an N-terminal arginine or lysine. In Nitrobacter winogradskyi (strain ATCC 25391 / DSM 10237 / CIP 104748 / NCIMB 11846 / Nb-255), this protein is Leucyl/phenylalanyl-tRNA--protein transferase.